Consider the following 125-residue polypeptide: Small ribosomal subunit protein uS13 (125 aa).

Belongs to the universal ribosomal protein uS13 family. In terms of assembly, part of the 30S ribosomal subunit. Forms a loose heterodimer with protein S19. Forms two bridges to the 50S subunit in the 70S ribosome.

Functionally, located at the top of the head of the 30S subunit, it contacts several helices of the 16S rRNA. In the 70S ribosome it contacts the 23S rRNA (bridge B1a) and protein L5 of the 50S subunit (bridge B1b), connecting the 2 subunits; these bridges are implicated in subunit movement. Contacts the tRNAs in the A and P-sites. The sequence is that of Small ribosomal subunit protein uS13 from Gluconacetobacter diazotrophicus (strain ATCC 49037 / DSM 5601 / CCUG 37298 / CIP 103539 / LMG 7603 / PAl5).